A 190-amino-acid polypeptide reads, in one-letter code: MGLLDAGITNHNVLVTSVDNVLNWARLSSLWPMGFGLACCAIEMMATNASNYDLERFGIFPRSSPRQSDLMLVAGTVTMKMAERVIRLYEQMPEPRYVLSMGSCSNSGGPYWEHGYHVLKGVDRIIPVDVYVPGCPPRPESLIGGLMKVQELIRMEQIGLSRADALKKLAENPIDPQAIIEQQRKTAVAH.

Residues C39, C40, C104, and C135 each contribute to the [4Fe-4S] cluster site.

Belongs to the complex I 20 kDa subunit family. NDH-1 is composed of 14 different subunits. Subunits NuoB, C, D, E, F, and G constitute the peripheral sector of the complex. The cofactor is [4Fe-4S] cluster.

The protein resides in the cell inner membrane. It carries out the reaction a quinone + NADH + 5 H(+)(in) = a quinol + NAD(+) + 4 H(+)(out). NDH-1 shuttles electrons from NADH, via FMN and iron-sulfur (Fe-S) centers, to quinones in the respiratory chain. The immediate electron acceptor for the enzyme in this species is believed to be a menaquinone. Couples the redox reaction to proton translocation (for every two electrons transferred, four hydrogen ions are translocated across the cytoplasmic membrane), and thus conserves the redox energy in a proton gradient. The protein is NADH-quinone oxidoreductase subunit B of Chlorobium chlorochromatii (strain CaD3).